The chain runs to 486 residues: NADH-quinone oxidoreductase subunit N (486 aa).

14 helical membrane-spanning segments follow: residues 11–31 (ALPE…DLFV), 44–64 (MLAL…YPVL), 74–94 (PIAS…MIYA), 103–123 (FLKG…CVMV), 128–148 (MLTL…LIAL), 163–183 (FVLG…VYGG), 206–226 (VSLG…AVPF), 238–258 (PTAV…VFVI), 267–287 (PAAV…LVVG), 300–320 (MLAY…LAAT), 328–348 (MFYA…LLAL), 371–391 (YALL…LVGF), 404–424 (VGLT…AFYY), and 452–472 (LVLG…NGLY).

Belongs to the complex I subunit 2 family. NDH-1 is composed of 14 different subunits. Subunits NuoA, H, J, K, L, M, N constitute the membrane sector of the complex.

It localises to the cell inner membrane. The enzyme catalyses a quinone + NADH + 5 H(+)(in) = a quinol + NAD(+) + 4 H(+)(out). Functionally, NDH-1 shuttles electrons from NADH, via FMN and iron-sulfur (Fe-S) centers, to quinones in the respiratory chain. The immediate electron acceptor for the enzyme in this species is believed to be ubiquinone. Couples the redox reaction to proton translocation (for every two electrons transferred, four hydrogen ions are translocated across the cytoplasmic membrane), and thus conserves the redox energy in a proton gradient. This Laribacter hongkongensis (strain HLHK9) protein is NADH-quinone oxidoreductase subunit N.